The sequence spans 329 residues: Diaminopimelate epimerase (329 aa).

The substrate site is built by Asn14 and Asn73. Cys82 functions as the Proton donor in the catalytic mechanism. Substrate is bound by residues 83 to 84, Asn170, Asn206, and 224 to 225; these read GN and ER. Catalysis depends on Cys233, which acts as the Proton acceptor. 234-235 provides a ligand contact to substrate; that stretch reads GT.

The protein belongs to the diaminopimelate epimerase family. In terms of assembly, homodimer.

It localises to the cytoplasm. It catalyses the reaction (2S,6S)-2,6-diaminopimelate = meso-2,6-diaminopimelate. It participates in amino-acid biosynthesis; L-lysine biosynthesis via DAP pathway; DL-2,6-diaminopimelate from LL-2,6-diaminopimelate: step 1/1. Functionally, catalyzes the stereoinversion of LL-2,6-diaminopimelate (L,L-DAP) to meso-diaminopimelate (meso-DAP), a precursor of L-lysine and an essential component of the bacterial peptidoglycan. The chain is Diaminopimelate epimerase from Listeria monocytogenes serotype 4a (strain HCC23).